The chain runs to 224 residues: Peptidyl-prolyl cis-trans isomerase CYP21-1 (224 aa).

The signal sequence occupies residues 1-27 (MRREISFLLQPRCLLLLVALTIFLVFA). The PPIase cyclophilin-type domain maps to 50 to 214 (FLDVDIDGQR…KKVVIADSGE (165 aa)). A glycan (N-linked (GlcNAc...) asparagine) is linked at N158.

Belongs to the cyclophilin-type PPIase family. In terms of tissue distribution, ubiquitous.

It localises to the endoplasmic reticulum. The enzyme catalyses [protein]-peptidylproline (omega=180) = [protein]-peptidylproline (omega=0). Its function is as follows. PPIases accelerate the folding of proteins. It catalyzes the cis-trans isomerization of proline imidic peptide bonds in oligopeptides. The chain is Peptidyl-prolyl cis-trans isomerase CYP21-1 (CYP21-1) from Arabidopsis thaliana (Mouse-ear cress).